The following is a 268-amino-acid chain: Undecaprenyl-diphosphatase (268 aa).

Transmembrane regions (helical) follow at residues 47–67 (FAILIQLGAILAIVALYFFKL), 83–103 (FIIGVLIAFLPAVIIGLIAGK), 109–129 (LFDPWVVCFSLIVGGAILLWV), 144–164 (YPLMMYLWIGVAQCLAMIPGV), 184–204 (AAEFSFFLAIPTMVGAFVYDF), 218–238 (LIAIGFVVSFITAMIVVKAFL), and 246–266 (FVLFAWWRVIVGTLGLIALAL).

This sequence belongs to the UppP family.

It localises to the cell inner membrane. The enzyme catalyses di-trans,octa-cis-undecaprenyl diphosphate + H2O = di-trans,octa-cis-undecaprenyl phosphate + phosphate + H(+). Catalyzes the dephosphorylation of undecaprenyl diphosphate (UPP). Confers resistance to bacitracin. This chain is Undecaprenyl-diphosphatase, found in Bradyrhizobium sp. (strain ORS 278).